The chain runs to 221 residues: MDPVVLSYMDSLLRQSDVSLLDPPSWLNDHIIGFAFEYFANSQFHDCSDHVCFISPEVTQFIKCTSSPAEIAMFLEPLDLPHKRVVFLAINDNSNQAAGGTHWSLLVYLQDKNSFFHYDSHSRSNSIHAKQVAEKLKAFLGSKGDKLVFVEEKAPAQENSYDCGMYVICNTEALCQSLFRRQPESPLQLLTPTYITKKRGEWKDLIARLAKKNEVATEECS.

At M1 the chain carries N-acetylmethionine. The tract at residues 11 to 174 (SLLRQSDVSL…MYVICNTEAL (164 aa)) is protease. Active-site residues include H102 and D119. C163 acts as the Nucleophile in catalysis.

It belongs to the peptidase C48 family.

In terms of biological role, protease that catalyzes two essential functions in the NEDD8 pathway: processing of full-length NEDD8 to its mature form and deconjugation of NEDD8 from targeted proteins such as cullins or p53. In Mus musculus (Mouse), this protein is Sentrin-specific protease 8 (Senp8).